The following is a 597-amino-acid chain: Sodium/mannose cotransporter SLC5A10 (597 aa).

The Extracellular portion of the chain corresponds to 1–16; that stretch reads MVADNSTSDPHAPGPQ. An N-linked (GlcNAc...) asparagine glycan is attached at N5. A helical transmembrane segment spans residues 17–37; it reads LSVTDIVVITVYFALNVAVGI. Residues 38–73 lie on the Cytoplasmic side of the membrane; the sequence is WSSCRASRNTVSGYFLAGRDMTWWPIGASLFGSSEG. The residue at position 49 (S49) is a Phosphoserine. Residues 74-94 traverse the membrane as a helical segment; that stretch reads SGLFIGLAGSGAAGGLAVAGF. Topologically, residues 95-100 are extracellular; that stretch reads DWNATY. The helical transmembrane segment at 101 to 121 threads the bilayer; that stretch reads VLLALAWVFGAIYISSEIVTL. At 122–137 the chain is on the cytoplasmic side; sequence AEYIQKRFGGQRIRMY. A helical transmembrane segment spans residues 138 to 158; it reads LSVLSLLLSVFTKISLDLYAG. The Extracellular portion of the chain corresponds to 159–171; that stretch reads ALFVHICLGWNFY. The chain crosses the membrane as a helical span at residues 172–194; the sequence is LSTILTLTITALYTITGGLVAVI. Over 195–200 the chain is Cytoplasmic; the sequence is YTDALQ. The chain crosses the membrane as a helical span at residues 201–219; that stretch reads TLIMVVGAVILAIKAFHQI. Over 220–265 the chain is Extracellular; the sequence is DGYGQMEAAYARAIPSRTVANTTCHLPRADAMHMFRDPYTGDLPWT. Residues 266–286 form a helical membrane-spanning segment; the sequence is GMTFGLTIMATWYWCTDQVIV. Over 287–301 the chain is Cytoplasmic; the sequence is QRSLSARNLNHAKAG. The helical transmembrane segment at 302-322 threads the bilayer; sequence SILASYLKMLPMGLMIMPGMI. Over 323-367 the chain is Extracellular; the sequence is SRALFPDEVGCVVPSECLRACGAEIGCSNIAYPKLVMELMPVGLR. The chain crosses the membrane as a helical span at residues 368 to 390; that stretch reads GLMIAVMMPALMSSLSSIFNSSS. The Cytoplasmic segment spans residues 391–410; that stretch reads TLFTMDIWRRLRPCASEREL. The chain crosses the membrane as a helical span at residues 411-431; it reads LLVGRLVIVVLIGVSVAWIPV. Over 432 to 444 the chain is Extracellular; it reads LQGSNGGQLFIYM. The helical transmembrane segment at 445–465 threads the bilayer; sequence QSVTSSLAPPVTAVFTLGIFW. The Cytoplasmic segment spans residues 466-472; it reads QRANEQG. The helical transmembrane segment at 473 to 493 threads the bilayer; the sequence is AFWGLLAGLAVGATRLVLEFL. The Extracellular segment spans residues 494–514; the sequence is HPAPPCGAADTRPAVLSQLHY. Residues 515–535 traverse the membrane as a helical segment; that stretch reads LHFAVALFVLTGAVAVGGSLL. At 536-576 the chain is on the cytoplasmic side; that stretch reads TPPPRRHQIENLTWWTLTRDLSLGAKAGDGQTPQRYTFWAR. A helical transmembrane segment spans residues 577–597; the sequence is VCGFNAILLMCVNIFFYAYFA.

Belongs to the sodium:solute symporter (SSF) (TC 2.A.21) family. In terms of tissue distribution, expressed only in kidney.

It is found in the apical cell membrane. It carries out the reaction D-mannose(out) + Na(+)(out) = D-mannose(in) + Na(+)(in). It catalyses the reaction D-fructopyranose(out) + Na(+)(out) = D-fructopyranose(in) + Na(+)(in). In terms of biological role, electrogenic Na+-coupled sugar symporter that actively transports D-mannose or D-fructose at the plasma membrane, with a Na+ to sugar coupling ratio of 1:1. Transporter activity is driven by a transmembrane Na+ electrochemical gradient set by the Na+/K+ pump. Exclusively recognizes sugar substrates having a pyranose ring with an axial hydroxyl group on carbon 2. Has likely evolved to enable renal reabsorption of D-mannose, an important constituent of oligosaccharide chains of glycoproteins. Contributes to dietary D-fructose reabsorption from glomerular filtrate across the brush border of the kidney. The sequence is that of Sodium/mannose cotransporter SLC5A10 (SLC5A10) from Oryctolagus cuniculus (Rabbit).